The sequence spans 317 residues: Fruit protein pKIWI502 (317 aa).

The interval 1–29 (MSITLSRPSLSRPSLSRHPSLTLHSSLSH) is disordered. The FAD-binding FR-type domain occupies 71-182 (YIWTPVPISR…TQIIGRGFDI (112 aa)).

The sequence is that of Fruit protein pKIWI502 from Actinidia deliciosa (Kiwi).